The primary structure comprises 368 residues: Somatostatin receptor type 5 (368 aa).

Residues 1–45 (MEPLFPASPLTTWNTSSVVPSGSGDENGTLAGLGPSPGARAVVVP) lie on the Extracellular side of the membrane. N-linked (GlcNAc...) asparagine glycosylation is found at Asn-14 and Asn-27. Residues 46–66 (VLYLLVCAVGLGGNTLVIYVV) form a helical membrane-spanning segment. Topologically, residues 67–77 (LRHAKMKTVTN) are cytoplasmic. A helical membrane pass occupies residues 78–98 (IYILNLAVADVLLMLGLPFVA). Residues 99 to 115 (TQNAISYWPFGPVLCRL) lie on the Extracellular side of the membrane. A disulfide bridge links Cys-113 with Cys-188. The chain crosses the membrane as a helical span at residues 116–136 (VMTLDGINQFTSIFCLTVMSV). Over 137-158 (DRYLAVVHPIRSARWRRPRVAK) the chain is Cytoplasmic. A helical membrane pass occupies residues 159-179 (LASAAVWAFSLVMSLPLVVFA). Over 180-207 (DIQEGWNTCNLSWPEPVGLWGAVFIIYT) the chain is Extracellular. A glycan (N-linked (GlcNAc...) asparagine) is linked at Asn-189. A helical membrane pass occupies residues 208-228 (SVLGFFGPLLVICLCYLLIVV). Residues 229–251 (KLKASGVRVGSTRRRSERKVTRM) lie on the Cytoplasmic side of the membrane. Residues 252-272 (VVVVVLVFAGCWLPFFIVNIV) form a helical membrane-spanning segment. Residues 273-286 (NLAFALPEEPASAG) are Extracellular-facing. The helical transmembrane segment at 287–309 (AYFFVVVLSYANSCANPLLYGFL) threads the bilayer. Topologically, residues 310 to 368 (SDNFRQSFRKVLCLRKGYGAGAEDADATEPQPGPSSRLQEAMMPVRSCKANGLMQTSKL) are cytoplasmic. Cys-322 is lipidated: S-palmitoyl cysteine; by ZDHHC5.

It belongs to the G-protein coupled receptor 1 family. As to quaternary structure, heterodimer with SSTR2. Heterodimerization with SSTR2 increases cell growth inhibition activity of SSTR2. In terms of processing, palmitoylated by ZDHHC5, but not ZDHHC3, nor ZDHHC8. Palmitoylation creates an additional intracellular loop which is thought to be important for efficient coupling to G-proteins and may target the protein to lipid rafts.

The protein resides in the cell membrane. In terms of biological role, receptor for somatostatin 28 and to a lesser extent for somatostatin-14. The activity of this receptor is mediated by G proteins which inhibit adenylyl cyclase. Increases cell growth inhibition activity of SSTR2 following heterodimerization. In Bos taurus (Bovine), this protein is Somatostatin receptor type 5 (SSTR5).